Reading from the N-terminus, the 791-residue chain is MKLKVSIGCDAQHTQIAWVNYEGRPTEVDGPLWVGRILVRVRDFDGFTPDGSPPKRDSEYFRGRSRKFQIQAEGRFKKEYNGDQVIYGTQFDHMISTFPESAFRAGMRIAKYIDPAVYYDKYARSPYIMSPFVACVNTLSAWPAPSRLEDAVISLVEADSQESDTESLPEINDSSDVSLSDLPSTNVTPKKTTTQIDVQTNIVTPPITVTAVPDSPNPPAATPATVADNDDLSIVSSDSGNTTAPRKNRHRYWSFAGFSDSTRFSHLNVPAAIPDAPSVKTETSQNVSQLSVKSAATSLAPVEDDEDDELLLHRHITNKHKDFNLHVKQLGLLHKPSLDLEEGYIMDENYGKDVYKHGISNVPDDENEDDLQRYFTALEMQQDQKEQHKKSKNKDPFRKITHPSLHLGKFSTPKLIKRMSLRSKKSLRNDSKSDDVGNSTHRFSTASAASTSAVKTEKEKKMSAPRRSLDKLIRIGSLHRHHHHHHKTDLIESDSGIEASESNRRKSDIFSFSGRNSFSVSRPSSSHSTLSYANDSASSAVNVAGETGSLPPLREQTSITSGVPPSNRLKKHVSTPEKIVEERSIDEVSQSNTPSSKQLPQSVDGKTVTANANSTTVAKQPTSNVALTRPKPVRTATSQSKIPKPVKHIPSDSNNLDPQLGPWRFANPKVDPIEDNSFIFGEHKSVKERRKYFSSSKFCRENFFYDKDVVYCMSFFSPHMDFNTFNLNIGPIRLNVYKHLNSDGHQPIRYMMRETDDEDAVMFVVEFDLLEDDDETVLAEQAKERERRKQT.

The tract at residues 158 to 189 (ADSQESDTESLPEINDSSDVSLSDLPSTNVTP) is disordered. Residues 174–184 (SSDVSLSDLPS) show a composition bias toward low complexity. The short motif at 373 to 379 (RYFTALE) is the FFAT element. At tyrosine 374 the chain carries Phosphotyrosine. Threonine 376 bears the Phosphothreonine mark. Disordered regions lie at residues 381 to 505 (QQDQ…SNRR), 542 to 606 (NVAG…VDGK), and 630 to 658 (PKPV…NLDP). Positions 415–426 (LIKRMSLRSKKS) are enriched in basic residues. A compositionally biased stretch (low complexity) spans 444–453 (STASAASTSA). Positions 455-473 (KTEKEKKMSAPRRSLDKLI) are enriched in basic and acidic residues. Residues serine 477 and serine 493 each carry the phosphoserine modification. Residues 477-487 (SLHRHHHHHHK) are compositionally biased toward basic residues. Residues 555–564 (EQTSITSGVP) show a composition bias toward polar residues. At serine 574 the chain carries Phosphoserine. A compositionally biased stretch (basic and acidic residues) spans 574 to 586 (STPEKIVEERSID). Residues 587–601 (EVSQSNTPSSKQLPQ) are compositionally biased toward polar residues.

Belongs to the UPF0590 family. In terms of assembly, interacts (via FFAT-motif) with scs2 (via MSP domain); the interaction is direct and serves to restrict the localization of duc1 to areas of cell membrane-endoplasmic reticulum contact sites, and away from the cell division site.

The protein localises to the cell membrane. In terms of biological role, promotes the proper distribution of phosphatidylinositol 4,5-bisphosphate (PtdIns(4,5)P2/PIP2) synthesis at the cell membrane. May bind phosphatidylinositol 4,5-bisphosphate (PtdIns(4,5)P2/PIP2) and is required for robust anchoring of the contractile ring to the cell membrane. This Schizosaccharomyces pombe (strain 972 / ATCC 24843) (Fission yeast) protein is DUF1769 family protein duc1.